Consider the following 382-residue polypeptide: Protein arginine N-methyltransferase PRMT10 (382 aa).

The interval 1–21 (MASLPNGAASASAASSAAGGG) is disordered. Residues 7–17 (GAASASAASSA) show a composition bias toward low complexity. Residues 28-359 (EVDFANYFCT…KENHRLMDME (332 aa)) enclose the SAM-dependent MTase PRMT-type domain. Active-site residues include Glu142 and Glu151. The dimerization arm stretch occupies residues 189–229 (ENKMEDLEIAMHDWNLFVEDTESYYGVNMNVLTKAYRAEHE).

The protein belongs to the class I-like SAM-binding methyltransferase superfamily. Protein arginine N-methyltransferase family. In terms of assembly, ring-like homodimer.

It catalyses the reaction L-arginyl-[protein] + 2 S-adenosyl-L-methionine = N(omega),N(omega)-dimethyl-L-arginyl-[protein] + 2 S-adenosyl-L-homocysteine + 2 H(+). Functionally, methylates (mono and asymmetric dimethylation) the guanidino nitrogens of arginyl residues in some proteins. This Oryza sativa subsp. indica (Rice) protein is Protein arginine N-methyltransferase PRMT10 (PRMT10).